The following is a 796-amino-acid chain: Protein translocase subunit SecA 2 (796 aa).

Residues Q84, 102-106, and D496 contribute to the ATP site; that span reads GEGKT.

The protein belongs to the SecA family. In terms of assembly, monomer and homodimer. Part of the essential Sec protein translocation apparatus which comprises SecA, SecYEG and auxiliary proteins SecDF. Other proteins may also be involved.

It localises to the cell membrane. The protein localises to the cytoplasm. It catalyses the reaction ATP + H2O + cellular proteinSide 1 = ADP + phosphate + cellular proteinSide 2.. In terms of biological role, part of the Sec protein translocase complex. Interacts with the SecYEG preprotein conducting channel. Has a central role in coupling the hydrolysis of ATP to the transfer of proteins into and across the cell membrane, serving as an ATP-driven molecular motor driving the stepwise translocation of polypeptide chains across the membrane. The polypeptide is Protein translocase subunit SecA 2 (Staphylococcus aureus (strain MSSA476)).